A 287-amino-acid chain; its full sequence is Acetylglutamate kinase (287 aa).

Substrate is bound by residues 70 to 71 (GG), R92, and N184.

The protein belongs to the acetylglutamate kinase family. ArgB subfamily.

The protein localises to the cytoplasm. The catalysed reaction is N-acetyl-L-glutamate + ATP = N-acetyl-L-glutamyl 5-phosphate + ADP. The protein operates within amino-acid biosynthesis; L-arginine biosynthesis; N(2)-acetyl-L-ornithine from L-glutamate: step 2/4. Catalyzes the ATP-dependent phosphorylation of N-acetyl-L-glutamate. This Dinoroseobacter shibae (strain DSM 16493 / NCIMB 14021 / DFL 12) protein is Acetylglutamate kinase.